Consider the following 188-residue polypeptide: dCTP deaminase (188 aa).

Residue 109-114 (KSTYAR) coordinates dCTP. Residue Glu-135 is the Proton donor/acceptor of the active site. Gln-154, Tyr-168, and Gln-178 together coordinate dCTP.

It belongs to the dCTP deaminase family. As to quaternary structure, homotrimer.

It catalyses the reaction dCTP + H2O + H(+) = dUTP + NH4(+). The protein operates within pyrimidine metabolism; dUMP biosynthesis; dUMP from dCTP (dUTP route): step 1/2. Catalyzes the deamination of dCTP to dUTP. The polypeptide is dCTP deaminase (Helicobacter pylori (strain J99 / ATCC 700824) (Campylobacter pylori J99)).